Consider the following 208-residue polypeptide: Small ribosomal subunit protein uS4 (208 aa).

The region spanning 98 to 163 (QRLDNVVYRM…NPQITRAIEL (66 aa)) is the S4 RNA-binding domain.

The protein belongs to the universal ribosomal protein uS4 family. Part of the 30S ribosomal subunit. Contacts protein S5. The interaction surface between S4 and S5 is involved in control of translational fidelity.

One of the primary rRNA binding proteins, it binds directly to 16S rRNA where it nucleates assembly of the body of the 30S subunit. In terms of biological role, with S5 and S12 plays an important role in translational accuracy. The sequence is that of Small ribosomal subunit protein uS4 from Campylobacter jejuni subsp. jejuni serotype O:6 (strain 81116 / NCTC 11828).